A 312-amino-acid polypeptide reads, in one-letter code: Acetylglutamate kinase (312 aa).

Substrate-binding positions include 74–75 (GG), arginine 96, and asparagine 195.

Belongs to the acetylglutamate kinase family. ArgB subfamily.

It is found in the cytoplasm. The enzyme catalyses N-acetyl-L-glutamate + ATP = N-acetyl-L-glutamyl 5-phosphate + ADP. It functions in the pathway amino-acid biosynthesis; L-arginine biosynthesis; N(2)-acetyl-L-ornithine from L-glutamate: step 2/4. Its function is as follows. Catalyzes the ATP-dependent phosphorylation of N-acetyl-L-glutamate. This chain is Acetylglutamate kinase, found in Nocardioides sp. (strain ATCC BAA-499 / JS614).